Reading from the N-terminus, the 214-residue chain is Nucleoplasmin-2 (214 aa).

The tract at residues 119–214 (ERYEASDLTW…ARAKKPGFKK (96 aa)) is disordered. The span at 127 to 155 (TWEEEEEEEGEEEEEEEEDDEDEDADISL) shows a compositional bias: acidic residues. Residues 129 to 152 (EEEEEEEGEEEEEEEEDDEDEDAD) form an acidic tract A2 region. Residues 165-180 (KRLVPQKQASVAKKKK) carry the Bipartite nuclear localization signal motif. Over residues 181–197 (LEKEEEEIRASVRDKSP) the composition is skewed to basic and acidic residues. Residues 198 to 214 (VKKAKATARAKKPGFKK) are compositionally biased toward basic residues.

The protein belongs to the nucleoplasmin family. In terms of assembly, homopentamer, when bound to H2A-H2B dimers only. Homodecamer of two stacked pentamers, when bound to H2A-H2B dimers and H3-H4 tetramers simultaneously.

The protein localises to the nucleus. Its function is as follows. Core histones chaperone involved in chromatin reprogramming, specially during fertilization and early embryonic development. Probably involved in sperm DNA decondensation during fertilization. This chain is Nucleoplasmin-2 (NPM2), found in Homo sapiens (Human).